Here is a 302-residue protein sequence, read N- to C-terminus: 4-diphosphocytidyl-2-C-methyl-D-erythritol kinase (302 aa).

Lys32 is an active-site residue. Pro115 to Ser125 contacts ATP. Residue Asp157 is part of the active site.

The protein belongs to the GHMP kinase family. IspE subfamily.

The enzyme catalyses 4-CDP-2-C-methyl-D-erythritol + ATP = 4-CDP-2-C-methyl-D-erythritol 2-phosphate + ADP + H(+). It functions in the pathway isoprenoid biosynthesis; isopentenyl diphosphate biosynthesis via DXP pathway; isopentenyl diphosphate from 1-deoxy-D-xylulose 5-phosphate: step 3/6. Its function is as follows. Catalyzes the phosphorylation of the position 2 hydroxy group of 4-diphosphocytidyl-2C-methyl-D-erythritol. The sequence is that of 4-diphosphocytidyl-2-C-methyl-D-erythritol kinase from Actinobacillus succinogenes (strain ATCC 55618 / DSM 22257 / CCUG 43843 / 130Z).